The sequence spans 312 residues: RNA binding protein fox-1 homolog 3 (312 aa).

The segment covering 1-29 (MAQPYPPAQYPPPPQNGIPAEYAPPPPHP) has biased composition (pro residues). Positions 1-104 (MAQPYPPAQY…KQQPKRLHVS (104 aa)) are disordered. Over residues 49–87 (TPAQTHPEQPGSEASTQPIAGTQTVPQTDEAAQTDSQPL) the composition is skewed to polar residues. Residues 100 to 175 (RLHVSNIPFR…RKIEVNNATA (76 aa)) enclose the RRM domain. Residue Arg223 is modified to Asymmetric dimethylarginine; alternate. Omega-N-methylarginine; alternate is present on Arg223. Residue Arg272 is modified to Asymmetric dimethylarginine.

The protein resides in the nucleus. The protein localises to the cytoplasm. In terms of biological role, pre-mRNA alternative splicing regulator. Regulates alternative splicing of RBFOX2 to enhance the production of mRNA species that are targeted for nonsense-mediated decay (NMD). The polypeptide is RNA binding protein fox-1 homolog 3 (RBFOX3) (Homo sapiens (Human)).